A 325-amino-acid polypeptide reads, in one-letter code: UPF0285 protein MM_0679 (325 aa).

It belongs to the UPF0285 family.

The polypeptide is UPF0285 protein MM_0679 (Methanosarcina mazei (strain ATCC BAA-159 / DSM 3647 / Goe1 / Go1 / JCM 11833 / OCM 88) (Methanosarcina frisia)).